A 186-amino-acid chain; its full sequence is uncharacterized protein (186 aa).

Residues 1–21 form the signal peptide; sequence MKFFLGSALFLILTFINLVRA. The Extracellular segment spans residues 22-142; that stretch reads EFEFITPAED…AFSVNPIDKK (121 aa). Residues Asn62, Asn75, Asn93, and Asn104 are each glycosylated (N-linked (GlcNAc...) asparagine). The helical transmembrane segment at 143–163 threads the bilayer; that stretch reads LAIGLSVGLSCCILIVLFLHF. Over 164–186 the chain is Cytoplasmic; that stretch reads ATRRERRILKNEKELEMSSYRKH.

The protein localises to the membrane. This is an uncharacterized protein from Schizosaccharomyces pombe (strain 972 / ATCC 24843) (Fission yeast).